We begin with the raw amino-acid sequence, 477 residues long: Methionine aminopeptidase 2 (477 aa).

Residues Met1–Asp121 are disordered. Residue Ala2 is modified to N-acetylalanine. Basic residues predominate over residues Lys36–Lys46. Ser45 is modified (phosphoserine). Residues Glu54–Lys78 are compositionally biased toward basic and acidic residues. Phosphoserine; alternate is present on Ser62. The O-linked (GlcNAc) serine; alternate glycan is linked to Ser62. Over residues Glu79–Gly91 the composition is skewed to acidic residues. Positions Gly96–Pro108 are enriched in basic residues. A substrate-binding site is contributed by His230. Residues Asp250, Asp261, and His330 each coordinate a divalent metal cation. His338 contacts substrate. The a divalent metal cation site is built by Glu363 and Glu458.

This sequence belongs to the peptidase M24A family. Methionine aminopeptidase eukaryotic type 2 subfamily. As to quaternary structure, binds EIF2S1 at low magnesium concentrations. Interacts strongly with the eIF-2 gamma-subunit EIF2S3. It depends on Co(2+) as a cofactor. Requires Zn(2+) as cofactor. Mn(2+) serves as cofactor. The cofactor is Fe(2+). Contains approximately 12 O-linked N-acetylglucosamine (GlcNAc) residues. O-glycosylation is required for EIF2S1 binding.

It localises to the cytoplasm. It carries out the reaction Release of N-terminal amino acids, preferentially methionine, from peptides and arylamides.. In terms of biological role, cotranslationally removes the N-terminal methionine from nascent proteins. The N-terminal methionine is often cleaved when the second residue in the primary sequence is small and uncharged (Met-Ala-, Cys, Gly, Pro, Ser, Thr, or Val). Protects eukaryotic initiation factor EIF2S1 from translation-inhibiting phosphorylation by inhibitory kinases such as EIF2AK2/PKR and EIF2AK1/HCR. Plays a critical role in the regulation of protein synthesis. The chain is Methionine aminopeptidase 2 from Bos taurus (Bovine).